Here is a 463-residue protein sequence, read N- to C-terminus: Protein translocase subunit SecY (463 aa).

Residues 1–20 (MGFMDFLAKMGENLPAVSKP) are Cytoplasmic-facing. A helical transmembrane segment spans residues 21–47 (KDKPTLTRKLLWTFIGLIVYLLMASIP). Residues 48–60 (LYGVTSSNSFLSN) are Extracellular-facing. The segment at residues 61–68 (FLAQQIIF) is an intramembrane region (helical). A discontinuously helical membrane pass occupies residues 61-89 (FLAQQIIFASSQGTLAQLGIGPVITSGLI). The stretch at 69-80 (ASSQGTLAQLGI) is an intramembrane region. An intramembrane region (helical) is located at residues 81-89 (GPVITSGLI). At 90–110 (MQILVGSKLINVDLTTQEGKS) the chain is on the cytoplasmic side. The helical transmembrane segment at 111–134 (KFTQAEKALALIFIIVESSLFGYV) threads the bilayer. The Extracellular portion of the chain corresponds to 135-142 (FTRATSNI). A helical membrane pass occupies residues 143–167 (LLPIIVVVQLIIASYIILLLDEMIQ). The Cytoplasmic portion of the chain corresponds to 168 to 174 (KGWGLGS). The chain crosses the membrane as a helical span at residues 175–193 (GVSLFIMAGIMKVIFWNMF). The Extracellular segment spans residues 194 to 236 (GIVSVQSQNLPVGFFPLLVSYITSGRNLQEIVLNTSSTTPYQP). A helical membrane pass occupies residues 237–258 (DLIGLIATVGLTILIVYLVNTN). Residues 259-283 (IYIPVTTQRLRGIRTTVPLNFLYVS) are Cytoplasmic-facing. Residues 284 to 305 (SIPVIFVSVLGADIQLFASLAN) form a helical membrane-spanning segment. At 306-341 (SISNSASGILTDIANAFFFPPQGVPHSVYALVVDPV) the chain is on the extracellular side. A helical membrane pass occupies residues 342–361 (GAAIYAAVFIVLSIVFGMLW). The Cytoplasmic portion of the chain corresponds to 362–404 (IDVAGLDPKTQAEQMIRSGIEIPGMRTNPRIIEGILSKYIYAL). A helical membrane pass occupies residues 405–423 (GFFSSLIVGLIAVVATFLG). Residues 424–426 (TYG) are Extracellular-facing. A helical transmembrane segment spans residues 427–441 (TGVGLLLAITIAMQY). The Cytoplasmic portion of the chain corresponds to 442–463 (YNLLAYERTLEMYPLLKRIVGE).

It belongs to the SecY/SEC61-alpha family. In terms of assembly, component of the Sec protein translocase complex. Heterotrimer consisting of alpha (SecY), beta (SecG) and gamma (SecE) subunits. The heterotrimers can form oligomers, although 1 heterotrimer is thought to be able to translocate proteins. Interacts with the ribosome. May interact with SecDF, and other proteins may be involved.

The protein localises to the cell membrane. Its function is as follows. The central subunit of the protein translocation channel SecYEG. Consists of two halves formed by TMs 1-5 and 6-10. These two domains form a lateral gate at the front which open onto the bilayer between TMs 2 and 7, and are clamped together by SecE at the back. The channel is closed by both a pore ring composed of hydrophobic SecY resides and a short helix (helix 2A) on the extracellular side of the membrane which forms a plug. The plug probably moves laterally to allow the channel to open. The ring and the pore may move independently. The polypeptide is Protein translocase subunit SecY (Sulfolobus acidocaldarius (strain ATCC 33909 / DSM 639 / JCM 8929 / NBRC 15157 / NCIMB 11770)).